Consider the following 424-residue polypeptide: Vasopressin V1a receptor (424 aa).

The segment at 1 to 40 (MSFPRGSQDRSVGNSSPWWPLTTEGSNGSQEAARLGEGDS) is disordered. Residues 1-52 (MSFPRGSQDRSVGNSSPWWPLTTEGSNGSQEAARLGEGDSPLGDVRNEELAK) lie on the Extracellular side of the membrane. Residues 9–30 (DRSVGNSSPWWPLTTEGSNGSQ) show a composition bias toward polar residues. An N-linked (GlcNAc...) asparagine glycan is attached at asparagine 27. A helical transmembrane segment spans residues 53–76 (LEIAVLAVIFVVAVLGNSSVLLAL). Over 77-88 (HRTPRKTSRMHL) the chain is Cytoplasmic. A helical transmembrane segment spans residues 89–110 (FIRHLSLADLAVAFFQVLPQLC). The Extracellular portion of the chain corresponds to 111–125 (WDITYRFRGPDWLCR). A disulfide bond links cysteine 124 and cysteine 205. The helical transmembrane segment at 126-147 (VVKHLQVFAMFASAYMLVVMTA) threads the bilayer. Residues 148–168 (DRYIAVCHPLKTLQQPARRSR) are Cytoplasmic-facing. Residues 169–190 (LMIATSWVLSFILSTPQYFIFS) traverse the membrane as a helical segment. The Extracellular segment spans residues 191–220 (VIEIEVNNGTKTQDCWATFIQPWGTRAYVT). Residues 221-241 (WMTSGVFVAPVVVLGTCYGFI) traverse the membrane as a helical segment. Topologically, residues 242–299 (CYHIWRNIRGKTASSRHSKGDKGSGEAVGPFHKGLLVTPCVSSVKSISRAKIRTVKMT) are cytoplasmic. A helical transmembrane segment spans residues 300 to 319 (FVIVSAYILCWAPFFIVQMW). Residues 320–337 (SVWDENFIWTDSENPSIT) are Extracellular-facing. Residues 338–357 (ITALLASLNSCCNPWIYMFF) form a helical membrane-spanning segment. Residues 358–424 (SGHLLQDCVQ…KSIRFIPVST (67 aa)) lie on the Cytoplasmic side of the membrane. S-palmitoyl cysteine attachment occurs at residues cysteine 371 and cysteine 372. A disordered region spans residues 383–416 (DSDSMSRRQTSYSNNRSPTNSTGMWKDSPKSSKS). Polar residues predominate over residues 389-405 (RRQTSYSNNRSPTNSTG). Phosphoserine is present on serine 410.

This sequence belongs to the G-protein coupled receptor 1 family. Vasopressin/oxytocin receptor subfamily. Post-translationally, palmitoylated on three cysteine residues, of which only two are identified. Localized within gonadotropes of the anterior pituitary of the brain. Broadly distributed throughout the cerebral cortex.

It is found in the cell membrane. The protein resides in the cytoplasmic vesicle membrane. In terms of biological role, receptor for arginine vasopressin. The activity of this receptor is mediated by G proteins which activate a phosphatidyl-inositol-calcium second messenger system. Involved in social memory formation. This chain is Vasopressin V1a receptor (Avpr1a), found in Rattus norvegicus (Rat).